Here is a 776-residue protein sequence, read N- to C-terminus: 5-methyltetrahydropteroyltriglutamate--homocysteine methyltransferase (776 aa).

Residues 16-19 (RELK) and K112 contribute to the 5-methyltetrahydropteroyltri-L-glutamate site. L-homocysteine contacts are provided by residues 435–437 (IGS) and E488. Residues 435–437 (IGS) and E488 contribute to the L-methionine site. 5-methyltetrahydropteroyltri-L-glutamate is bound by residues 519–520 (RC) and W565. D603 serves as a coordination point for L-homocysteine. D603 contacts L-methionine. A 5-methyltetrahydropteroyltri-L-glutamate-binding site is contributed by E609. 3 residues coordinate Zn(2+): H645, C647, and E669. H698 acts as the Proton donor in catalysis. C730 contacts Zn(2+).

It belongs to the vitamin-B12 independent methionine synthase family. Zn(2+) serves as cofactor.

The enzyme catalyses 5-methyltetrahydropteroyltri-L-glutamate + L-homocysteine = tetrahydropteroyltri-L-glutamate + L-methionine. It functions in the pathway amino-acid biosynthesis; L-methionine biosynthesis via de novo pathway; L-methionine from L-homocysteine (MetE route): step 1/1. Its function is as follows. Catalyzes the transfer of a methyl group from 5-methyltetrahydrofolate to homocysteine resulting in methionine formation. The polypeptide is 5-methyltetrahydropteroyltriglutamate--homocysteine methyltransferase (Ralstonia pickettii (strain 12J)).